The sequence spans 591 residues: Aspartate--tRNA(Asp/Asn) ligase (591 aa).

An L-aspartate-binding site is contributed by glutamate 176. Residues 200–203 (QLFK) are aspartate. Arginine 222 lines the L-aspartate pocket. Residues 222–224 (RDE) and glutamine 231 contribute to the ATP site. Histidine 450 is a binding site for L-aspartate. An ATP-binding site is contributed by glutamate 484. Arginine 491 is an L-aspartate binding site. An ATP-binding site is contributed by 536–539 (GLDR).

This sequence belongs to the class-II aminoacyl-tRNA synthetase family. Type 1 subfamily. As to quaternary structure, homodimer.

The protein localises to the cytoplasm. The enzyme catalyses tRNA(Asx) + L-aspartate + ATP = L-aspartyl-tRNA(Asx) + AMP + diphosphate. Its function is as follows. Aspartyl-tRNA synthetase with relaxed tRNA specificity since it is able to aspartylate not only its cognate tRNA(Asp) but also tRNA(Asn). Reaction proceeds in two steps: L-aspartate is first activated by ATP to form Asp-AMP and then transferred to the acceptor end of tRNA(Asp/Asn). This is Aspartate--tRNA(Asp/Asn) ligase from Bacillus cereus (strain ATCC 14579 / DSM 31 / CCUG 7414 / JCM 2152 / NBRC 15305 / NCIMB 9373 / NCTC 2599 / NRRL B-3711).